Consider the following 548-residue polypeptide: Zinc metalloproteinase (548 aa).

The first 28 residues, 1–28, serve as a signal peptide directing secretion; it reads MKKYYAVTGIALAVGMLCTTQLAGATQA. H362 is a Zn(2+) binding site. E363 is an active-site residue. Zn(2+) contacts are provided by H366 and E386. The segment at 440 to 459 is disordered; it reads SNWKPTATNPNDNNDQGGVH. Residues 442 to 459 show a composition bias toward polar residues; that stretch reads WKPTATNPNDNNDQGGVH. The active-site Proton donor is the H459.

The protein belongs to the peptidase M4 family. Ca(2+) serves as cofactor. It depends on Zn(2+) as a cofactor.

The protein localises to the secreted. Its subcellular location is the cell wall. Zinc metalloprotease with hemolytic properties. This is Zinc metalloproteinase (hly) from Renibacterium salmoninarum.